We begin with the raw amino-acid sequence, 662 residues long: MSDLFSFNKEKKTKIINNTYSAKDIEVLEGLEPVRKRPGMYIGGTDLNAMHHLVSEVLDNSMDEAVAGFASIITIKMHQDHSITISDNGRGIPIDNHPKFPNKSALEVILTTLHSGGKFSSNVYQTAGGLHGVGVSVVNALAEHLEIKVYKQGKLYKQSYAKGEKLTELICEEAPKRLKGTSINFIPDPEIFGDKIHFNPKKVYELARSKAYLYRGVTIEWECEIEASSDVPKKALINFPNGLKDYLSSKITPDDLITTEIFSGNVESEQDGIKLEWAICWQNNDSSAFIQSYCNTVPTPLGGTHEQGLKSALLRGLKAYGEMVGNKKTANLAIEDILETASVVLSIFIAEPTFQGQTKEKLVSQGVSKPAENIIKDHFDHFLSSNKTIANNLLEHFIAIAEFRLNKKNEKTISRKNATQKLRLPGKLADCTRTSPEGTELFIVEGDSAGGSAKQARNRETQAVLPLWGKVLNVASSTLEKIVNNQAIQDLEIALACGSMKNYKKENLRYEKIIIMTDADVDGAHIASLLMTFFFLRMPKLVEDGHLYLAKPPLYRLTQSNKTYYANDEEEKAKLTDKLSKSSKAKIEVGRFKGLGEMMPMQLKETTMHPEKRSLLKVTLEDFQNVDKIVDDLMGKKPEKRFQFIYEQALVKMDKIINELDI.

Residues Tyr-20, Asn-60, Asp-87, Gly-129–Val-135, and Lys-359 each bind ATP. The Toprim domain occupies Thr-439–Pro-553. 3 residues coordinate Mg(2+): Glu-445, Asp-518, and Asp-520.

This sequence belongs to the type II topoisomerase family. ParE type 1 subfamily. As to quaternary structure, heterotetramer composed of ParC and ParE. It depends on Mg(2+) as a cofactor. Mn(2+) is required as a cofactor. Requires Ca(2+) as cofactor.

It carries out the reaction ATP-dependent breakage, passage and rejoining of double-stranded DNA.. In terms of biological role, topoisomerase IV is essential for chromosome segregation. It relaxes supercoiled DNA. Performs the decatenation events required during the replication of a circular DNA molecule. This is DNA topoisomerase 4 subunit B from Rickettsia bellii (strain RML369-C).